Reading from the N-terminus, the 255-residue chain is MGKTNVSHKLYITLLAGGMGKRMQSNLPKVLHKVNGETMIVRLMKQVIKLNPDKILVVVGKFYSEISSEIKQHINDNRIEFVVQKEPLGTGDAVKCTLPLLINDNIDNIILNGDVPMIQHSTIKNIYNYYLETKSKLLITSIHLSNPTGCGRIILDENFGFSEIIEEKDCTEDQKKLTLVNCGIYVCNSKILKQSIPQISNNNSQKEYYLTDLVKIYNNEPSNNINLFILPRNKEIEIYNINTKEQLEYIESVSK.

It catalyses the reaction N-acetyl-alpha-D-glucosamine 1-phosphate + UTP + H(+) = UDP-N-acetyl-alpha-D-glucosamine + diphosphate. Its pathway is nucleotide-sugar biosynthesis; UDP-N-acetyl-alpha-D-glucosamine biosynthesis; UDP-N-acetyl-alpha-D-glucosamine from N-acetyl-alpha-D-glucosamine 1-phosphate: step 1/1. This Acanthamoeba polyphaga (Amoeba) protein is Probable UDP-N-acetylglucosamine pyrophosphorylase.